A 424-amino-acid polypeptide reads, in one-letter code: MIENNAAYLQTLGQQAKQASYALAGLTGQQKQALLSAIAGSLTKNSATILAANAKDVVAARSNGLNDAMIDRLLLDESRLQGVIGDIDNVINLTDPVGTELESQVLDNGLRLSRRRVPLGVIGVIYEARPNVTVDIAVLALKTGNAVILRGGKETLQSNLALSEAIRAAVVEQGLPADSVQLIQSPDRALVSGLLKLDQFVDMIVPRGGQNLQRLCAEQATIPVILGGIGICHLYADKDADIAKSIAVIANAKVQRPTVCNALDTVLVHEAIADQLLPQLYTHLAASGVTFYGCQSAQAIADKLGVAISIATEETYGQEWLSLTLGVKVVSDIDTAIDHIRTYSSGHSEGILTDSIHASAHFVNEVDSAAVYVNASTRFTDGGQFGLGAEVAVSTQKLHARGPMGLEALTTYKWIGVGEYTARS.

Belongs to the gamma-glutamyl phosphate reductase family.

It is found in the cytoplasm. The enzyme catalyses L-glutamate 5-semialdehyde + phosphate + NADP(+) = L-glutamyl 5-phosphate + NADPH + H(+). Its pathway is amino-acid biosynthesis; L-proline biosynthesis; L-glutamate 5-semialdehyde from L-glutamate: step 2/2. In terms of biological role, catalyzes the NADPH-dependent reduction of L-glutamate 5-phosphate into L-glutamate 5-semialdehyde and phosphate. The product spontaneously undergoes cyclization to form 1-pyrroline-5-carboxylate. This chain is Gamma-glutamyl phosphate reductase, found in Shewanella sediminis (strain HAW-EB3).